The following is a 91-amino-acid chain: Large ribosomal subunit protein eL34 (91 aa).

Residues 48–69 are disordered; it reads RGRPVEMRKLPKTKKRPERPMP.

This sequence belongs to the eukaryotic ribosomal protein eL34 family.

This Pyrococcus horikoshii (strain ATCC 700860 / DSM 12428 / JCM 9974 / NBRC 100139 / OT-3) protein is Large ribosomal subunit protein eL34 (rpl34e).